Here is an 874-residue protein sequence, read N- to C-terminus: MEKLLRLCCWYSWLLLFYYNFQVRGVYSRSQDHPGFQVLASASHYWPLENVDGIHELQDTTGDIVEGKVNKGIYLKEEKGVTLLYYGRYNSSCISKPEQCGPEGVTFSFFWKTQGEQSRPIPSAYGGQVISNGFKVCSSGGRGSVELYTRDNSMTWEASFSPPGPYWTHVLFTWKSKEGLKVYVNGTLSTSDPSGKVSRDYGESNVNLVIGSEQDQAKCYENGAFDEFIIWERALTPDEIAMYFTAAIGKHALLSSTLPSLFMTSTASPVMPTDAYHPIITNLTEERKTFQSPGVILSYLQNVSLSLPSKSLSEQTALNLTKTFLKAVGEILLLPGWIALSEDSAVVLSLIDTIDTVMGHVSSNLHGSTPQVTVEGSSAMAEFSVAKILPKTVNSSHYRFPAHGQSFIQIPHEAFHRHAWSTVVGLLYHSMHYYLNNIWPAHTKIAEAMHHQDCLLFATSHLISLEVSPPPTLSQNLSGSPLITVHLKHRLTRKQHSEATNSSNRVFVYCAFLDFSSGEGVWSNHGCALTRGNLTYSVCRCTHLTNFAILMQVVPLELARGHQVALSSISYVGCSLSVLCLVATLVTFAVLSSVSTIRNQRYHIHANLSFAVLVAQVLLLISFRLEPGTTPCQVMAVLLHYFFLSAFAWMLVEGLHLYSMVIKVFGSEDSKHRYYYGMGWGFPLLICIISLSFAMDSYGTSNNCWLSLASGAIWAFVAPALFVIVVNIGILIAVTRVISQISADNYKIHGDPSAFKLTAKAVAVLLPILGTSWVFGVLAVNGCAVVFQYMFATLNSLQGLFIFLFHCLLNSEVRAAFKHKTKVWSLTSSSARTSNAKPFHSDLMNGTRPGMASTKLSPWDKSSHSAHRVDLSAV.

An N-terminal signal peptide occupies residues 1 to 25; it reads MEKLLRLCCWYSWLLLFYYNFQVRG. Residues 26–567 are Extracellular-facing; it reads VYSRSQDHPG…LARGHQVALS (542 aa). Residues 79 to 276 form the Pentraxin (PTX) domain; that stretch reads KGVTLLYYGR…ASPVMPTDAY (198 aa). Residues Asn-90, Asn-185, Asn-282, Asn-302, Asn-319, Asn-394, Asn-476, Asn-501, and Asn-533 are each glycosylated (N-linked (GlcNAc...) asparagine). In terms of domain architecture, GAIN-B spans 371 to 557; that stretch reads QVTVEGSSAM…AILMQVVPLE (187 aa). 2 cysteine pairs are disulfide-bonded: Cys-510-Cys-539 and Cys-527-Cys-541. Residues 510 to 557 form a GPS region; it reads CAFLDFSSGEGVWSNHGCALTRGNLTYSVCRCTHLTNFAILMQVVPLE. Positions 546 to 554 are stachel; the sequence is NFAILMQVV. Gln-563 is a 17beta-hydroxy-5alpha-androstan-3-one binding site. The chain crosses the membrane as a helical span at residues 568–590; that stretch reads SISYVGCSLSVLCLVATLVTFAV. Topologically, residues 591-601 are cytoplasmic; that stretch reads LSSVSTIRNQR. The helical transmembrane segment at 602–623 threads the bilayer; sequence YHIHANLSFAVLVAQVLLLISF. The Extracellular segment spans residues 624-632; sequence RLEPGTTPC. Cys-632 and Cys-704 are joined by a disulfide. A helical membrane pass occupies residues 633 to 655; the sequence is QVMAVLLHYFFLSAFAWMLVEGL. Residues 656–673 are Cytoplasmic-facing; that stretch reads HLYSMVIKVFGSEDSKHR. A helical transmembrane segment spans residues 674-695; it reads YYYGMGWGFPLLICIISLSFAM. Residues 696-710 lie on the Extracellular side of the membrane; it reads DSYGTSNNCWLSLAS. The chain crosses the membrane as a helical span at residues 711 to 732; sequence GAIWAFVAPALFVIVVNIGILI. Residues 733-757 are Cytoplasmic-facing; sequence AVTRVISQISADNYKIHGDPSAFKL. The helical transmembrane segment at 758–780 threads the bilayer; that stretch reads TAKAVAVLLPILGTSWVFGVLAV. At 781 to 783 the chain is on the extracellular side; sequence NGC. Residues 784 to 810 form a helical membrane-spanning segment; that stretch reads AVVFQYMFATLNSLQGLFIFLFHCLLN. Asn-795 is a binding site for 17beta-hydroxy-5alpha-androstan-3-one. At 811-874 the chain is on the cytoplasmic side; the sequence is SEVRAAFKHK…SAHRVDLSAV (64 aa). The tract at residues 854 to 874 is disordered; the sequence is TKLSPWDKSSHSAHRVDLSAV. The span at 861-874 shows a compositional bias: basic and acidic residues; the sequence is KSSHSAHRVDLSAV.

The protein belongs to the G-protein coupled receptor 2 family. Adhesion G-protein coupled receptor (ADGR) subfamily. As to quaternary structure, heterodimer of 2 chains generated by proteolytic processing; the large extracellular N-terminal fragment and the membrane-bound C-terminal fragment predominantly remain associated and non-covalently linked. Interacts with ESYT1; interaction takes place in absence of cytosolic calcium and inhibits the G protein-coupled receptor activity of ADGRD1. Autoproteolytically processed at the GPS region of the GAIN-B domain; this cleavage modulates receptor activity. Cleavage takes place early in the secretory pathway before N-glycosylation. Up-regulated in CD133(+) cell population of glioblastoma.

The protein localises to the cell membrane. With respect to regulation, forms a heterodimer of 2 chains generated by proteolytic processing that remain associated through non-covalent interactions mediated by the GAIN-B domain. In the inactivated receptor, the Stachel sequence (also named stalk) is embedded in the GAIN-B domain, where it adopts a beta-strand conformation. On activation, the Stachel moves into the 7 transmembrane region and adopts a twisted hook-shaped configuration that forms contacts within the receptor, leading to coupling of a G-alpha protein, which activates signaling. The cleaved GAIN-B and N-terminal domains can then dissociate from the rest of the receptor. Interaction with ESYT1 in absence of cytosolic calcium inhibits the G protein-coupled receptor activity; interaction and inhibition is relieved when cytosolic calcium increases. Activated by AP503, a small molecule that activates ADGRD1 without activating androgen nuclear receptors: AP503 enhances muscle strength without eliciting androgenic adverse effects. Activated by the 8E3E8 antibody that targets the N-terminus. Adhesion G-protein coupled receptor (aGPCR) for androgen hormone 5alpha-dihydrotestosterone (5alpha-DHT), also named 17beta-hydroxy-5alpha-androstan-3-one, the most potent hormone among androgens. Also activated by methenolone drug. Ligand binding causes a conformation change that triggers signaling via guanine nucleotide-binding proteins (G proteins) and modulates the activity of downstream effectors, such as adenylate cyclase. ADGRD1 is coupled to G(s) G proteins and mediates activation of adenylate cyclase activity. Acts as a 5alpha-DHT receptor in muscle cells, thereby increasing intracellular cyclic AMP (cAMP) levels and enhancing muscle strength. The chain is Adhesion G-protein coupled receptor D1 from Homo sapiens (Human).